The sequence spans 173 residues: Secreted RxLR effector protein RXLR-C12 (173 aa).

The N-terminal stretch at methionine 1 to threonine 18 is a signal peptide. Positions arginine 41–arginine 55 match the RxLR-dEER motif. Asparagine 155 is a glycosylation site (N-linked (GlcNAc...) asparagine).

The protein belongs to the RxLR effector family.

The protein localises to the secreted. The protein resides in the host cytoplasm. Its subcellular location is the host nucleus. Its function is as follows. Secreted effector that suppresses pattern-triggered immunity (PTI) in plant host. This is Secreted RxLR effector protein RXLR-C12 from Plasmopara halstedii (Downy mildew of sunflower).